A 664-amino-acid chain; its full sequence is MFKLVSEFEPTGDQPQAIEKLVEGLNRGMRFQTLLGVTGSGKTFTMANVIARVNRPALVISPNKTLAAQLYQEFKTFFPENRVEFFISYYDYYQPEAYIPTKDLYIEKNADINDVIVRMRMSTLKSVRTRRDVVVVASVSCIYATGDPNDFDRMNINLAVGDRIDVLELAERLARIGYQRTEDVSLSGCFRLKGDTVEIYPTYQDEGIRIEFFGDEVDSITLIDRFNRTTLEHLDKIIIYPAVEFITTEEKLKRAVESIREELNERLSELKKQGKILEYERLKQRTLNDIELLETMGYCPGIENYSRHFDGRKPGEPPYTLLDYFDKDFIVFIDESHITVPQLRAMYNGDRSRKKNLVEYGFRLPSAYDNRPLTFEEFLKKTGQIIFVSATPGDFELSISEQVVEQIIRPTGLVDPEVEVRPTAGQVDDLVNEIVKVKERGERALVTVLTKKTAELLSEHLTELGIRSLYLHSELDAIERVEVLKKLRRGDVDVVVGVNLLREGLDLPEVSLVAIMDADVEGFLRSETTLIQIIGRTARNVNGKVIMYADRITNAMKRAIEETNRRRRIQLEYNRKHGITPRSVIKPLEIEVFEQFMVKEEPERYGDTVKNIFEMKKTLSPEEYMAVLEEEMYRAASELRYEDAAALRDELFRIREEIKKKKGL.

The Helicase ATP-binding domain maps to 23-412 (EGLNRGMRFQ…VVEQIIRPTG (390 aa)). ATP is bound at residue 36–43 (GVTGSGKT). Positions 89–112 (YYDYYQPEAYIPTKDLYIEKNADI) match the Beta-hairpin motif. A Helicase C-terminal domain is found at 429–588 (DLVNEIVKVK…ITPRSVIKPL (160 aa)). In terms of domain architecture, UVR spans 622 to 657 (EEYMAVLEEEMYRAASELRYEDAAALRDELFRIREE).

This sequence belongs to the UvrB family. As to quaternary structure, forms a heterotetramer with UvrA during the search for lesions. Interacts with UvrC in an incision complex.

It localises to the cytoplasm. Functionally, the UvrABC repair system catalyzes the recognition and processing of DNA lesions. A damage recognition complex composed of 2 UvrA and 2 UvrB subunits scans DNA for abnormalities. Upon binding of the UvrA(2)B(2) complex to a putative damaged site, the DNA wraps around one UvrB monomer. DNA wrap is dependent on ATP binding by UvrB and probably causes local melting of the DNA helix, facilitating insertion of UvrB beta-hairpin between the DNA strands. Then UvrB probes one DNA strand for the presence of a lesion. If a lesion is found the UvrA subunits dissociate and the UvrB-DNA preincision complex is formed. This complex is subsequently bound by UvrC and the second UvrB is released. If no lesion is found, the DNA wraps around the other UvrB subunit that will check the other stand for damage. This chain is UvrABC system protein B, found in Thermotoga maritima (strain ATCC 43589 / DSM 3109 / JCM 10099 / NBRC 100826 / MSB8).